The primary structure comprises 929 residues: Chitin synthase 1 (929 aa).

The span at 1–12 shows a compositional bias: gly residues; that stretch reads MAYRGAGGPGGG. Disordered regions lie at residues 1–43 and 114–156; these read MAYR…QEDE and MGGH…GGGL. 2 stretches are compositionally biased toward polar residues: residues 21-33 and 140-149; these read QDLN…SNVQ and SWVQRQNPNA. N-linked (GlcNAc...) asparagine glycosylation occurs at Asn560. 5 consecutive transmembrane segments (helical) span residues 587–607, 643–663, 678–698, 730–750, and 758–778; these read FFFH…WFSL, LFNA…FILA, SFFV…YLVV, VILL…FMYL, and SFPY…VYAF. The N-linked (GlcNAc...) asparagine glycan is linked to Asn801. The next 2 helical transmembrane spans lie at 857-877 and 897-917; these read TMLV…ITSD and FLLF…LWFL.

The protein belongs to the chitin synthase family. Class III subfamily.

It is found in the cell membrane. The enzyme catalyses [(1-&gt;4)-N-acetyl-beta-D-glucosaminyl](n) + UDP-N-acetyl-alpha-D-glucosamine = [(1-&gt;4)-N-acetyl-beta-D-glucosaminyl](n+1) + UDP + H(+). In terms of biological role, polymerizes chitin, a structural polymer of the cell wall and septum, by transferring the sugar moiety of UDP-GlcNAc to the non-reducing end of the growing chitin polymer. CHS1 and CHS3 have compensatory functions in cell wall modifications in responses to stresses. Involved in appressoria formation and required for full virulence. This is Chitin synthase 1 from Pyricularia oryzae (strain 70-15 / ATCC MYA-4617 / FGSC 8958) (Rice blast fungus).